The following is a 103-amino-acid chain: Large ribosomal subunit protein bL21 (103 aa).

Belongs to the bacterial ribosomal protein bL21 family. As to quaternary structure, part of the 50S ribosomal subunit. Contacts protein L20.

This protein binds to 23S rRNA in the presence of protein L20. In Maridesulfovibrio salexigens (strain ATCC 14822 / DSM 2638 / NCIMB 8403 / VKM B-1763) (Desulfovibrio salexigens), this protein is Large ribosomal subunit protein bL21.